We begin with the raw amino-acid sequence, 163 residues long: Large ribosomal subunit protein uL18 (163 aa).

The protein belongs to the universal ribosomal protein uL18 family. As to quaternary structure, part of the 50S ribosomal subunit. Contacts the 5S and 23S rRNAs.

In terms of biological role, this is one of the proteins that bind and probably mediate the attachment of the 5S RNA into the large ribosomal subunit, where it forms part of the central protuberance. The chain is Large ribosomal subunit protein uL18 from Thermoplasma acidophilum (strain ATCC 25905 / DSM 1728 / JCM 9062 / NBRC 15155 / AMRC-C165).